A 246-amino-acid polypeptide reads, in one-letter code: Transmembrane and ubiquitin-like domain-containing protein 1 (246 aa).

The interval 2–30 is required to release iHOPS from membranes; it reads ALIEGVGDEVTILFSALACLLVLALAWVS. Residues 11–31 traverse the membrane as a helical segment; that stretch reads VTILFSALACLLVLALAWVST. Residues 35 to 102 are disordered; that stretch reads EGADPLPQPS…PPPPDSPQEP (68 aa). Pro residues predominate over residues 40-50; sequence LPQPSGTPTPT. Phosphothreonine occurs at positions 71 and 92. Serine 98 and serine 127 each carry phosphoserine. A Ubiquitin-like domain is found at 103–176; it reads LVLRLKFLND…LHCHVSTRVG (74 aa). 2 consecutive transmembrane segments (helical) span residues 195 to 215 and 221 to 241; these read VGSLLLPLLLLLLLLLWYCQI and FPLTATLGLAGFTLLLSLLAF.

As to quaternary structure, interacts with EEF1A1, GRIA2, GRIP1, CAMLG, TUBG1. Interacts with NPM1 and CDKN2A; TMUB1 can enhance interaction between NPM1 and CDKN2A and is proposed to bridge the proteins; proposed to be mediated by iHOPS. Interacts with ERLIN2 and AMFR; TMUB1 promotes the interaction of ERLIN2 with AMFR. Processed by regulated intramembrane proteolysis (RIP) in the N-terminus to release iHOPS from membranes.

The protein resides in the membrane. The protein localises to the postsynaptic cell membrane. Its subcellular location is the recycling endosome. It localises to the cytoplasm. It is found in the nucleus. The protein resides in the nucleolus. The protein localises to the cytoskeleton. Its subcellular location is the microtubule organizing center. It localises to the centrosome. Functionally, involved in sterol-regulated ubiquitination and degradation of HMG-CoA reductase HMGCR. Involved in positive regulation of AMPA-selective glutamate receptor GRIA2 recycling to the cell surface. Acts as negative regulator of hepatocyte growth during regeneration. Its function is as follows. May contribute to the regulation of translation during cell-cycle progression. May contribute to the regulation of cell proliferation. May be involved in centrosome assembly. Modulates stabilization and nucleolar localization of tumor suppressor CDKN2A and enhances association between CDKN2A and NPM1. This chain is Transmembrane and ubiquitin-like domain-containing protein 1 (TMUB1), found in Bos taurus (Bovine).